Here is a 123-residue protein sequence, read N- to C-terminus: S-adenosylmethionine decarboxylase proenzyme 2 (123 aa).

Ser65 serves as the catalytic Schiff-base intermediate with substrate; via pyruvic acid. Ser65 carries the post-translational modification Pyruvic acid (Ser); by autocatalysis. His70 serves as the catalytic Proton acceptor; for processing activity. Cys85 (proton donor; for catalytic activity) is an active-site residue.

The protein belongs to the prokaryotic AdoMetDC family. Type 1 subfamily. As to quaternary structure, heterotetramer of two alpha and two beta chains arranged as a dimer of alpha/beta heterodimers. Pyruvate serves as cofactor. Is synthesized initially as an inactive proenzyme. Formation of the active enzyme involves a self-maturation process in which the active site pyruvoyl group is generated from an internal serine residue via an autocatalytic post-translational modification. Two non-identical subunits are generated from the proenzyme in this reaction, and the pyruvate is formed at the N-terminus of the alpha chain, which is derived from the carboxyl end of the proenzyme. The post-translation cleavage follows an unusual pathway, termed non-hydrolytic serinolysis, in which the side chain hydroxyl group of the serine supplies its oxygen atom to form the C-terminus of the beta chain, while the remainder of the serine residue undergoes an oxidative deamination to produce ammonia and the pyruvoyl group blocking the N-terminus of the alpha chain.

The catalysed reaction is S-adenosyl-L-methionine + H(+) = S-adenosyl 3-(methylsulfanyl)propylamine + CO2. The protein operates within amine and polyamine biosynthesis; S-adenosylmethioninamine biosynthesis; S-adenosylmethioninamine from S-adenosyl-L-methionine: step 1/1. In terms of biological role, catalyzes the decarboxylation of S-adenosylmethionine to S-adenosylmethioninamine (dcAdoMet), the propylamine donor required for the synthesis of the polyamines spermine and spermidine from the diamine putrescine. This chain is S-adenosylmethionine decarboxylase proenzyme 2, found in Bacillus cereus (strain ATCC 14579 / DSM 31 / CCUG 7414 / JCM 2152 / NBRC 15305 / NCIMB 9373 / NCTC 2599 / NRRL B-3711).